The primary structure comprises 412 residues: uncharacterized protein (412 aa).

7 repeat units span residues 112-116 (GSIRS), 117-121 (GSIRS), 122-126 (GSIRD), 127-131 (GSIRD), 132-136 (GSIRS), 137-141 (GNIRD), and 142-146 (GSVRS). The segment at 112–146 (GSIRSGSIRSGSIRDGSIRDGSIRSGNIRDGSVRS) is 7 X 5 AA tandem repeats of G-[NS]-[IV]-R-[DS]. A compositionally biased stretch (low complexity) spans 116–126 (SGSIRSGSIRD). The interval 116 to 209 (SGSIRSGSIR…SEKSIKPSTK (94 aa)) is disordered. Basic and acidic residues predominate over residues 192–209 (NHYAESEYSEKSIKPSTK).

The protein belongs to the asfivirus B407L family.

This is an uncharacterized protein from Ornithodoros (relapsing fever ticks).